Reading from the N-terminus, the 278-residue chain is Probable F-box protein At1g14315 (278 aa).

The F-box domain occupies 1–43 (MQLLPHDTVEDILERVPVKSLLRFKSACKQWKLTIESQYFQAK).

The chain is Probable F-box protein At1g14315 from Arabidopsis thaliana (Mouse-ear cress).